We begin with the raw amino-acid sequence, 335 residues long: Dehydration-responsive element-binding protein 2A (335 aa).

Disordered stretches follow at residues 1-32 and 50-74; these read MAVY…GTTV and STKK…GPEN. The Nuclear localization signal motif lies at 19–55; that stretch reads RKRKSRSRGDGTTVAERLKRWKEYNETVEEVSTKKRK. Basic residues predominate over residues 52 to 66; that stretch reads KKRKVPAKGSKKGCM. Residues 78–135 constitute a DNA-binding region (AP2/ERF); the sequence is SFRGVRQRIWGKWVAEIREPNRGSRLWLGTFPTAQEAASAYDEAAKAMYGPLARLNFP. The tract at residues 279–304 is disordered; the sequence is QDRYPGNSVANGSYRPESQQSGFDPL. Residues 286–304 show a composition bias toward polar residues; the sequence is SVANGSYRPESQQSGFDPL.

Belongs to the AP2/ERF transcription factor family. ERF subfamily. As to quaternary structure, interacts with MED25. Binds to DPB3-1 in the nucleus during heat-stress. Ubiquitinated by DRIP1 and DRIP2. Ubiquitination probably leads to its subsequent degradation, thus negatively regulating response to drought. Expressed preferentially in roots and stems, and at a lower level in leaves.

Its subcellular location is the nucleus. Transcriptional activator that binds specifically to the DNA sequence 5'-[AG]CCGAC-3'. Binding to the C-repeat/DRE element mediates high salinity- and dehydration-inducible transcription. Promotes the expression of heat stress-inducible genes by contributing to the formation of a heat stress-specific transcriptional complex with NF-Y subunits (e.g. DPB3-1, NF-YA2 and NF-YB3) at the promoter of target genes, thus promoting heat tolerance. This chain is Dehydration-responsive element-binding protein 2A, found in Arabidopsis thaliana (Mouse-ear cress).